A 220-amino-acid chain; its full sequence is Pyridoxine/pyridoxamine 5'-phosphate oxidase (220 aa).

Substrate-binding positions include 13 to 16 (RVEY) and Lys-77. Residues 72 to 77 (RTVLCK), 87 to 88 (FT), Lys-94, and Gln-116 each bind FMN. The substrate site is built by Tyr-134, Arg-138, and Ser-142. Residues 151–152 (QS) and Trp-197 each bind FMN. Residue 203–205 (RLH) coordinates substrate. Residue Arg-207 coordinates FMN.

This sequence belongs to the pyridoxamine 5'-phosphate oxidase family. Homodimer. It depends on FMN as a cofactor.

The enzyme catalyses pyridoxamine 5'-phosphate + O2 + H2O = pyridoxal 5'-phosphate + H2O2 + NH4(+). It carries out the reaction pyridoxine 5'-phosphate + O2 = pyridoxal 5'-phosphate + H2O2. It functions in the pathway cofactor metabolism; pyridoxal 5'-phosphate salvage; pyridoxal 5'-phosphate from pyridoxamine 5'-phosphate: step 1/1. The protein operates within cofactor metabolism; pyridoxal 5'-phosphate salvage; pyridoxal 5'-phosphate from pyridoxine 5'-phosphate: step 1/1. Functionally, catalyzes the oxidation of either pyridoxine 5'-phosphate (PNP) or pyridoxamine 5'-phosphate (PMP) into pyridoxal 5'-phosphate (PLP). The polypeptide is Pyridoxine/pyridoxamine 5'-phosphate oxidase (Mycolicibacterium paratuberculosis (strain ATCC BAA-968 / K-10) (Mycobacterium paratuberculosis)).